Consider the following 279-residue polypeptide: Oxygen-dependent coproporphyrinogen-III oxidase (279 aa).

Ser-102 contributes to the substrate binding site. His-106 and His-116 together coordinate a divalent metal cation. His-116 (proton donor) is an active-site residue. 118-120 (NTR) provides a ligand contact to substrate. A divalent metal cation is bound by residues His-149 and His-179. The tract at residues 244–279 (YVEFNLLYDRGTKFGLMTDGNVEAILMSLPPEVKFN) is important for dimerization.

It belongs to the aerobic coproporphyrinogen-III oxidase family. In terms of assembly, homodimer. A divalent metal cation serves as cofactor.

It is found in the cytoplasm. The catalysed reaction is coproporphyrinogen III + O2 + 2 H(+) = protoporphyrinogen IX + 2 CO2 + 2 H2O. The protein operates within porphyrin-containing compound metabolism; protoporphyrin-IX biosynthesis; protoporphyrinogen-IX from coproporphyrinogen-III (O2 route): step 1/1. Functionally, involved in the heme biosynthesis. Catalyzes the aerobic oxidative decarboxylation of propionate groups of rings A and B of coproporphyrinogen-III to yield the vinyl groups in protoporphyrinogen-IX. This is Oxygen-dependent coproporphyrinogen-III oxidase from Rickettsia rickettsii (strain Iowa).